The chain runs to 270 residues: Protein ABHD14A (270 aa).

A helical; Signal-anchor for type II membrane protein transmembrane segment spans residues 9–29; sequence LVVLGLVLLATVLLYLLLPSM. N61 is a glycosylation site (N-linked (GlcNAc...) asparagine). Residues S170 and D221 each act as charge relay system in the active site. N237 carries an N-linked (GlcNAc...) asparagine glycan. H248 functions as the Charge relay system in the catalytic mechanism.

This sequence belongs to the AB hydrolase superfamily. ABHD14 family.

It localises to the cytoplasm. It is found in the membrane. Functionally, possible role in granule neuron development. This Danio rerio (Zebrafish) protein is Protein ABHD14A.